Consider the following 249-residue polypeptide: MQPPGPQQPPPPPLFTPNNGDFTFVSSADAEDPSGSITTPDVKLNLGGEFIKESSATTFLRQRGYGWLLEVEDDDPEDNKPLLEELDIDLKDIYYKIRCVLMPMPSLGFNRQVVRDNPDFWGPLAVVLFFSMISLYGQFKVVSWIITIWIFGSLTIFLLARVLGGEVAYGQVLGVIGYSLLPLIVIAPVLLVVGSFEVVSTLIKLFGVFWAAYSAASLLVGEEFKTKKPLLIYPIFLLYIYFLSLYTGV.

The span at methionine 1–phenylalanine 15 shows a compositional bias: pro residues. The disordered stretch occupies residues methionine 1–proline 40. The Cytoplasmic segment spans residues methionine 1 to aspartate 116. The segment covering threonine 16–serine 26 has biased composition (polar residues). A helical transmembrane segment spans residues asparagine 117–glycine 137. Position 138 (glutamine 138) is a topological domain, lumenal. The chain crosses the membrane as a helical span at residues phenylalanine 139–leucine 159. At alanine 160–glutamine 171 the chain is on the cytoplasmic side. Residues valine 172–valine 192 traverse the membrane as a helical segment. The Lumenal portion of the chain corresponds to valine 193–serine 200. Residues threonine 201 to glycine 221 form a helical membrane-spanning segment. The Cytoplasmic portion of the chain corresponds to glutamate 222 to lysine 228. A helical transmembrane segment spans residues proline 229–valine 249.

This sequence belongs to the YIP1 family.

The protein localises to the golgi apparatus. It is found in the cis-Golgi network membrane. Its function is as follows. Involved in the maintenance of the Golgi structure. The protein is Protein YIPF4 (YIPF4) of Gallus gallus (Chicken).